The primary structure comprises 1157 residues: Zinc finger protein 516 (1157 aa).

Over residues M1–R13 the composition is skewed to basic and acidic residues. Residues M1–V26 form a disordered region. The mediates promoter DNA-binding and activation of transcription stretch occupies residues M1–A420. 7 C2H2-type zinc fingers span residues H34–H56, Y62–H84, V162–H185, F188–H211, F236–H258, H264–H286, and E323–H345. Basic and acidic residues predominate over residues S449 to D458. Disordered stretches follow at residues S449–S503 and S523–E653. The span at A494–S503 shows a compositional bias: polar residues. The C2H2-type 8 zinc finger occupies S504–H526. Positions R531–A541 are enriched in basic and acidic residues. Residues E550–G561 are compositionally biased toward polar residues. Residues E575–V585 show a composition bias toward acidic residues. The segment covering G601–D612 has biased composition (polar residues). K630 participates in a covalent cross-link: Glycyl lysine isopeptide (Lys-Gly) (interchain with G-Cter in SUMO2). Over residues S644–E653 the composition is skewed to basic and acidic residues. K669 is covalently cross-linked (Glycyl lysine isopeptide (Lys-Gly) (interchain with G-Cter in SUMO2)). A C2H2-type 9; atypical zinc finger spans residues H753–H776. Disordered regions lie at residues T831–V996 and R1013–Q1040. The segment covering G914 to V928 has biased composition (polar residues). Glycyl lysine isopeptide (Lys-Gly) (interchain with G-Cter in SUMO2) cross-links involve residues K1032 and K1051. A C2H2-type 10 zinc finger spans residues F1092–H1114. A disordered region spans residues P1123–I1157.

The protein belongs to the krueppel C2H2-type zinc-finger protein family. As to quaternary structure, interacts with PRDM16; the interaction is direct and may play a role in the transcription of brown adipose tissue-specific genes. Interacts with PWWP2B. Interacts with HDAC1; this interaction is enhanced in the presence of PWWP2B. In terms of tissue distribution, expressed by adipocytes more specifically in brown adipose tissue compared to white adipose tissue (WAT).

It localises to the nucleus. Functionally, transcriptional regulator that binds to the promoter and activates the transcription of genes promoting brown adipose tissue (BAT) differentiation. Among brown adipose tissue-specific genes, binds the proximal region of the promoter of the UCP1 gene to activate its transcription and thereby regulate thermogenesis. May also play a role in the cellular response to replication stress. The protein is Zinc finger protein 516 of Mus musculus (Mouse).